The following is a 269-amino-acid chain: Gem-associated protein 2 (269 aa).

A phosphoserine mark is found at serine 70 and serine 155.

This sequence belongs to the gemin-2 family. In terms of assembly, monomer. Part of the core SMN complex that contains SMN1, GEMIN2/SIP1, DDX20/GEMIN3, GEMIN4, GEMIN5, GEMIN6, GEMIN7, GEMIN8 and STRAP/UNRIP. Part of the SMN-Sm complex that contains SMN1, GEMIN2/SIP1, DDX20/GEMIN3, GEMIN4, GEMIN5, GEMIN6, GEMIN7, GEMIN8, STRAP/UNRIP and the Sm proteins SNRPB, SNRPD1, SNRPD2, SNRPD3, SNRPE, SNRPF and SNRPG. Interacts with GEMIN5; the interaction is direct. Interacts (via C-terminus) with SMN1; the interaction is direct. Interacts with SNRPD1; the interaction is direct. Interacts with SNRPD2; the interaction is direct. Interacts (via N-terminus) with SNRPF; the interaction is direct. Interacts (via N-terminus) with SNRPE; the interaction is direct. Interacts (via N-terminus) with SNRPG; the interaction is direct.

Its subcellular location is the nucleus. The protein resides in the gem. It localises to the cytoplasm. Functionally, the SMN complex catalyzes the assembly of small nuclear ribonucleoproteins (snRNPs), the building blocks of the spliceosome, and thereby plays an important role in the splicing of cellular pre-mRNAs. Most spliceosomal snRNPs contain a common set of Sm proteins SNRPB, SNRPD1, SNRPD2, SNRPD3, SNRPE, SNRPF and SNRPG that assemble in a heptameric protein ring on the Sm site of the small nuclear RNA to form the core snRNP (Sm core). In the cytosol, the Sm proteins SNRPD1, SNRPD2, SNRPE, SNRPF and SNRPG (5Sm) are trapped in an inactive 6S pICln-Sm complex by the chaperone CLNS1A that controls the assembly of the core snRNP. To assemble core snRNPs, the SMN complex accepts the trapped 5Sm proteins from CLNS1A. Binding of snRNA inside 5Sm ultimately triggers eviction of the SMN complex, thereby allowing binding of SNRPD3 and SNRPB to complete assembly of the core snRNP. Within the SMN complex, GEMIN2 constrains the conformation of 5Sm, thereby promoting 5Sm binding to snRNA containing the snRNP code (a nonameric Sm site and a 3'-adjacent stem-loop), thus preventing progression of assembly until a cognate substrate is bound. This chain is Gem-associated protein 2, found in Mus musculus (Mouse).